A 150-amino-acid chain; its full sequence is Large ribosomal subunit protein uL15 (150 aa).

A disordered region spans residues 1–57 (MSLTLQSLKPQKGARRRKMRKGRGIAAGQGASCGFGMRGQKSRSGRPTRPGFEGGQM). Residues 12-23 (KGARRRKMRKGR) show a composition bias toward basic residues. Residues 25–37 (IAAGQGASCGFGM) show a composition bias toward gly residues.

Belongs to the universal ribosomal protein uL15 family. Part of the 50S ribosomal subunit.

In terms of biological role, binds to the 23S rRNA. In Synechococcus sp. (strain RCC307), this protein is Large ribosomal subunit protein uL15.